The chain runs to 2760 residues: A-kinase anchor protein 13 (2760 aa).

Disordered regions lie at residues 356 to 388 (CSHK…QDSC), 442 to 517 (PDAR…EPKQ), 530 to 577 (AAGA…VLPA), 604 to 711 (SSLD…AAHN), 729 to 857 (EKDL…EQEG), 890 to 940 (GGSI…QEIS), 954 to 1029 (EKAL…ASEA), and 1132 to 1162 (EGTD…DLPT). The span at 378 to 388 (DSRSASHQDSC) shows a compositional bias: polar residues. Residues 442 to 454 (PDARQHSSGRELP) show a composition bias toward basic and acidic residues. The segment at 482 to 504 (QNSKPQVGESAKERLENSDISSA) is important for interaction with PRKAR2A. Residues 530–547 (AAGADAPAEASPAWSPEE) are compositionally biased toward low complexity. 3 stretches are compositionally biased toward polar residues: residues 620 to 638 (KQNS…SQAP), 654 to 664 (CPQSTETSSGG), and 701 to 711 (DTVTSDTAAHN). Low complexity predominate over residues 769–780 (SSFSLASSPESE). Ser-776 bears the Phosphoserine mark. Residue Thr-801 is modified to Phosphothreonine. A compositionally biased stretch (basic and acidic residues) spans 814 to 826 (PDGRDLNDTDKVG). Over residues 839-849 (ELQTSMGNTSP) the composition is skewed to polar residues. A compositionally biased stretch (basic and acidic residues) spans 906-931 (GKDKATKCPSVKEDVHSSEMSREDQR). Thr-932 bears the Phosphothreonine mark. Polar residues-rich tracts occupy residues 958–972 (QHSN…CLQT) and 1001–1020 (TSLS…SGSS). Ser-962 carries the phosphoserine modification. Residues 1213-1228 (SIEETATRIVEAVIKQ) are important for interaction with PRKAR2A. Disordered stretches follow at residues 1392–1411 (GVLQ…PSDE), 1425–1508 (LLCD…VPAN), and 1520–1539 (SPFR…DAEM). Low complexity predominate over residues 1428–1439 (DTTGSSSSTDDT). Positions 1449–1472 (GSDVSLPQTSKLNRSRNHQSSNGF) are enriched in polar residues. Phosphoserine is present on residues Ser-1450, Ser-1468, Ser-1501, Ser-1526, and Ser-1585. An important for interaction with MAP2K3 region spans residues 1546–1695 (QVLGHVVRRP…SRPFHSASAN (150 aa)). A disordered region spans residues 1592–1628 (GGGVGNKPSSSLEISSANSSELRNPFSGEEQRSSLMS). Low complexity predominate over residues 1600–1611 (SSSLEISSANSS). Residues Ser-1625, Ser-1628, and Ser-1630 each carry the phosphoserine modification. At Lys-1654 the chain carries N6-methyllysine. Positions 1733–1755 (RNKMSSSKKSKKEKDKKTLNGHT) are disordered. Residues 1753 to 1800 (GHTFSPIPIVGPINCSQCMKPFTNKDAYTCASCGAFVHKGCRENLASC) form a Phorbol-ester/DAG-type zinc finger. Phosphoserine occurs at positions 1838, 1857, and 1891. The interval 1881–2760 (MSNTWKFLSH…VPAEGEEIFC (880 aa)) is interaction with ESR1. Thr-1892 is subject to Phosphothreonine. Phosphoserine occurs at positions 1894 and 1907. The DH domain occupies 1956 to 2153 (KRQEVIYELM…KDVIGAVDSK (198 aa)). Residues 2176–2280 (MRMKSGQMFA…WIQIIQDTIN (105 aa)) enclose the PH domain. Phosphoserine is present on residues Ser-2292 and Ser-2345. Positions 2292–2329 (SENEEEKRLLDTKARELKEQLQQKDQQILLLLEEKEMI) form a coiled coil. Position 2415 is a phosphothreonine (Thr-2415). The tract at residues 2422–2450 (HQLNASKGGEKEEGDDGQDLRRTESDSGL) is disordered. A compositionally biased stretch (basic and acidic residues) spans 2439–2450 (QDLRRTESDSGL). A phosphoserine mark is found at Ser-2511 and Ser-2514. A coiled-coil region spans residues 2516-2632 (LIEQEKQRSL…LSQRQMEQDL (117 aa)). 2 disordered regions span residues 2568-2588 (AERE…REEL) and 2660-2760 (TPSI…EIFC). 2 stretches are compositionally biased toward polar residues: residues 2660 to 2684 (TPSI…SISR) and 2696 to 2711 (SSAS…SQAP). Phosphoserine is present on Ser-2676. The segment covering 2743–2752 (PGDGPAPEVP) has biased composition (low complexity).

In terms of assembly, interacts with the cAMP-dependent protein kinase (PKA) holoenzyme and with the regulatory subunit PRKAR2A. Interacts with RHOA. Also interacts with RHOB and RHOC. Identified in a ternary complex with RHOA and PRKAR2A. Identified in a complex with NR3C1 and RHOA. Interacts with BRAF and KSR1. Identified in a complex with BRAF and KSR1. Component of a signaling complex containing at least AKAP13, PKN1, MAPK14, ZAK and MAP2K3. Within this complex, AKAP13 interacts directly with PKN1, which in turn recruits MAPK14, MAP2K3 and ZAK. Interacts (phosphorylated form) with YWHAB and YWHAZ. Interaction with YWHAB inhibits activation of RHOA, interferes with PKN1 binding and activation of MAP kinases. Interacts with GNA12. Interacts with IKBKB. Interacts with ESR1, THRA, PPARA and NME2. Interacts (via the C-terminal domain after the PH domain) with MEF2C and RXRB. Interacts (via the C-terminal domain after the PH domain) with PRKD1. In terms of tissue distribution, detected in bone osteoblasts (at protein level).

It localises to the cytoplasm. Its subcellular location is the cytosol. The protein localises to the cell cortex. It is found in the nucleus. The protein resides in the membrane. Its function is as follows. Scaffold protein that plays an important role in assembling signaling complexes downstream of several types of G protein-coupled receptors. Activates RHOA in response to signaling via G protein-coupled receptors via its function as Rho guanine nucleotide exchange factor. May also activate other Rho family members. Part of a kinase signaling complex that links ADRA1A and ADRA1B adrenergic receptor signaling to the activation of downstream p38 MAP kinases, such as MAPK11 and MAPK14. Part of a signaling complex that links ADRA1B signaling to the activation of RHOA and IKBKB/IKKB, leading to increased NF-kappa-B transcriptional activity. Part of a RHOA-dependent signaling cascade that mediates responses to lysophosphatidic acid (LPA), a signaling molecule that activates G-protein coupled receptors and potentiates transcriptional activation of the glucocorticoid receptor NR3C1. Part of a signaling cascade that stimulates MEF2C-dependent gene expression in response to lysophosphatidic acid (LPA). Part of a signaling pathway that activates MAPK11 and/or MAPK14 and leads to increased transcription activation of the estrogen receptors ESR1 and ESR2. Part of a signaling cascade that links cAMP and EGFR signaling to BRAF signaling and to PKA-mediated phosphorylation of KSR1, leading to the activation of downstream MAP kinases, such as MAPK1 or MAPK3. Functions as a scaffold protein that anchors cAMP-dependent protein kinase (PKA) and PRKD1. This promotes activation of PRKD1, leading to increased phosphorylation of HDAC5 and ultimately cardiomyocyte hypertrophy. Has no guanine nucleotide exchange activity on CDC42, Ras or Rac. Required for normal embryonic heart development, and in particular for normal sarcomere formation in the developing cardiomyocytes. Plays a role in cardiomyocyte growth and cardiac hypertrophy in response to activation of the beta-adrenergic receptor by phenylephrine or isoproterenol. Required for normal adaptive cardiac hypertrophy in response to pressure overload. Plays a role in osteogenesis. The protein is A-kinase anchor protein 13 of Rattus norvegicus (Rat).